A 344-amino-acid polypeptide reads, in one-letter code: Heat-inducible transcription repressor HrcA (344 aa).

This sequence belongs to the HrcA family.

Functionally, negative regulator of class I heat shock genes (grpE-dnaK-dnaJ and groELS operons). Prevents heat-shock induction of these operons. The protein is Heat-inducible transcription repressor HrcA of Geobacillus stearothermophilus (Bacillus stearothermophilus).